The chain runs to 300 residues: Type II methyltransferase M.Cfr9I (300 aa).

Positions 109 to 129 are disordered; it reads RGYRAPDKKNPARAMAVRPDT.

This sequence belongs to the N(4)/N(6)-methyltransferase family. N(4) subfamily.

The enzyme catalyses a 2'-deoxycytidine in DNA + S-adenosyl-L-methionine = an N(4)-methyl-2'-deoxycytidine in DNA + S-adenosyl-L-homocysteine + H(+). Its function is as follows. A beta subtype methylase, recognizes the double-stranded sequence 5'-CCCGGG-3', methylates C-2 on both strands, and protects the DNA from cleavage by the Cfr9I endonuclease. The chain is Type II methyltransferase M.Cfr9I from Citrobacter freundii.